We begin with the raw amino-acid sequence, 1405 residues long: DNA-directed RNA polymerase subunit beta' (1405 aa).

Zn(2+)-binding residues include C65, C67, C80, and C83. D468, D470, and D472 together coordinate Mg(2+). Residues C811, C885, C892, and C895 each contribute to the Zn(2+) site.

The protein belongs to the RNA polymerase beta' chain family. The RNAP catalytic core consists of 2 alpha, 1 beta, 1 beta' and 1 omega subunit. When a sigma factor is associated with the core the holoenzyme is formed, which can initiate transcription. Mg(2+) serves as cofactor. It depends on Zn(2+) as a cofactor.

It carries out the reaction RNA(n) + a ribonucleoside 5'-triphosphate = RNA(n+1) + diphosphate. DNA-dependent RNA polymerase catalyzes the transcription of DNA into RNA using the four ribonucleoside triphosphates as substrates. This Azobacteroides pseudotrichonymphae genomovar. CFP2 protein is DNA-directed RNA polymerase subunit beta'.